Reading from the N-terminus, the 426-residue chain is Adenylosuccinate synthetase (426 aa).

Residues 14-20 and 42-44 each bind GTP; these read GDEGKGK and GHT. Catalysis depends on D15, which acts as the Proton acceptor. D15 and G42 together coordinate Mg(2+). IMP-binding positions include 15 to 18, 40 to 43, T130, R144, Q224, T239, and R303; these read DEGK and NAGH. The active-site Proton donor is H43. Position 299 to 305 (299 to 305) interacts with substrate; that stretch reads TVTKRPR. GTP contacts are provided by residues R305, 331-333, and 413-415; these read LID and SVG.

It belongs to the adenylosuccinate synthetase family. Homodimer. Mg(2+) serves as cofactor.

The protein resides in the cytoplasm. The enzyme catalyses IMP + L-aspartate + GTP = N(6)-(1,2-dicarboxyethyl)-AMP + GDP + phosphate + 2 H(+). It functions in the pathway purine metabolism; AMP biosynthesis via de novo pathway; AMP from IMP: step 1/2. Its function is as follows. Plays an important role in the de novo pathway of purine nucleotide biosynthesis. Catalyzes the first committed step in the biosynthesis of AMP from IMP. The polypeptide is Adenylosuccinate synthetase (Malacoplasma penetrans (strain HF-2) (Mycoplasma penetrans)).